Consider the following 418-residue polypeptide: Serine hydroxymethyltransferase (418 aa).

(6S)-5,6,7,8-tetrahydrofolate is bound by residues L121 and 125 to 127 (GHL). K230 is subject to N6-(pyridoxal phosphate)lysine. (6S)-5,6,7,8-tetrahydrofolate is bound by residues E246 and 355-357 (SPF).

Belongs to the SHMT family. Homodimer. Requires pyridoxal 5'-phosphate as cofactor.

The protein resides in the cytoplasm. The enzyme catalyses (6R)-5,10-methylene-5,6,7,8-tetrahydrofolate + glycine + H2O = (6S)-5,6,7,8-tetrahydrofolate + L-serine. The protein operates within one-carbon metabolism; tetrahydrofolate interconversion. It functions in the pathway amino-acid biosynthesis; glycine biosynthesis; glycine from L-serine: step 1/1. Its function is as follows. Catalyzes the reversible interconversion of serine and glycine with tetrahydrofolate (THF) serving as the one-carbon carrier. This reaction serves as the major source of one-carbon groups required for the biosynthesis of purines, thymidylate, methionine, and other important biomolecules. Also exhibits THF-independent aldolase activity toward beta-hydroxyamino acids, producing glycine and aldehydes, via a retro-aldol mechanism. This is Serine hydroxymethyltransferase from Streptococcus pneumoniae (strain ATCC 700669 / Spain 23F-1).